The chain runs to 342 residues: L-threonine 3-dehydrogenase (342 aa).

Position 38 (cysteine 38) interacts with Zn(2+). Residues threonine 40 and histidine 43 each act as charge relay system in the active site. 6 residues coordinate Zn(2+): histidine 63, glutamate 64, cysteine 93, cysteine 96, cysteine 99, and cysteine 107. Residues isoleucine 175, aspartate 195, arginine 200, 262–264 (LGI), and 286–287 (IY) contribute to the NAD(+) site.

It belongs to the zinc-containing alcohol dehydrogenase family. Homotetramer. Requires Zn(2+) as cofactor.

It localises to the cytoplasm. The enzyme catalyses L-threonine + NAD(+) = (2S)-2-amino-3-oxobutanoate + NADH + H(+). It functions in the pathway amino-acid degradation; L-threonine degradation via oxydo-reductase pathway; glycine from L-threonine: step 1/2. Functionally, catalyzes the NAD(+)-dependent oxidation of L-threonine to 2-amino-3-ketobutyrate. This Burkholderia ambifaria (strain MC40-6) protein is L-threonine 3-dehydrogenase.